The primary structure comprises 572 residues: Excitatory amino acid transporter 2 (572 aa).

Over residues 1-11 the composition is skewed to polar residues; that stretch reads MASTEGANNMP. The disordered stretch occupies residues 1 to 28; sequence MASTEGANNMPKQVEVRMHDSHLSSDEP. Residues 1–44 lie on the Cytoplasmic side of the membrane; sequence MASTEGANNMPKQVEVRMHDSHLSSDEPKHRNLGMRMCDKLGKN. Phosphoserine is present on residues serine 3, serine 21, serine 24, and serine 25. Over residues 14 to 28 the composition is skewed to basic and acidic residues; the sequence is VEVRMHDSHLSSDEP. A lipid anchor (S-palmitoyl cysteine) is attached at cysteine 38. A run of 3 helical transmembrane segments spans residues 45-64, 88-108, and 121-142; these read LLLSLTVFGVILGAVCGGLL, MLKMLILPLIISSLITGLSGL, and MVYYMSTTIIAAVLGVILVLAI. Asparagine 205 and asparagine 215 each carry an N-linked (GlcNAc...) asparagine glycan. The next 3 helical transmembrane spans lie at 235 to 258, 268 to 295, and 317 to 338; these read FKDGMNVLGLIGFFIAFGIAMGKM, FFNILNEIVMKLVIMIMWYSPLGIACLI, and ITVIVGLIIHGGIFLPLIYFVV. An intramembrane region (discontinuously helical) is located at residues 344 to 374; that stretch reads FSFFAGIFQAWITALGTASSAGTLPVTFRCL. Residue 361–363 participates in L-aspartate binding; that stretch reads ASS. A helical membrane pass occupies residues 384-410; sequence VTRFVLPVGATINMDGTALYEAVAAIF. Glycine 392, threonine 394, and asparagine 396 together coordinate Na(+). L-aspartate-binding positions include threonine 400, 441-445, aspartate 474, and asparagine 481; that span reads IPSAG. An intramembrane region (discontinuously helical) is located at residues 424–457; the sequence is IVTVSLTATLASIGAASIPSAGLVTMLLILTAVG. A helical membrane pass occupies residues 471–492; sequence WLLDRMRTSVNVVGDSFGAGIV. Na(+)-binding residues include asparagine 481 and aspartate 485. Phosphoserine occurs at positions 505, 520, 530, and 532. The residue at position 537 (tyrosine 537) is a Phosphotyrosine. A phosphoserine mark is found at serine 542, serine 558, and serine 562.

This sequence belongs to the dicarboxylate/amino acid:cation symporter (DAACS) (TC 2.A.23) family. SLC1A2 subfamily. In terms of assembly, homotrimer. Interacts with AJUBA. Glycosylated. Post-translationally, palmitoylation at Cys-38 is not required for correct subcellular localization, but is important for glutamate uptake activity. Detected in brain. Detected in embryonic forebrain, especially in globus pallidus, perirhinal cortex, lateral hypothalamus, hippocampus, and on fimbria and axonal pathways connecting the neocortex, basal ganglia and thalamus (at protein level). Isoform GLT1 is expressed in the brain. Isoforms GLT-1A and GLT-1B are expressed in the liver.

It is found in the cell membrane. The enzyme catalyses K(+)(in) + L-glutamate(out) + 3 Na(+)(out) + H(+)(out) = K(+)(out) + L-glutamate(in) + 3 Na(+)(in) + H(+)(in). It carries out the reaction K(+)(in) + L-aspartate(out) + 3 Na(+)(out) + H(+)(out) = K(+)(out) + L-aspartate(in) + 3 Na(+)(in) + H(+)(in). It catalyses the reaction D-aspartate(out) + K(+)(in) + 3 Na(+)(out) + H(+)(out) = D-aspartate(in) + K(+)(out) + 3 Na(+)(in) + H(+)(in). Sodium-dependent, high-affinity amino acid transporter that mediates the uptake of L-glutamate and also L-aspartate and D-aspartate. Functions as a symporter that transports one amino acid molecule together with two or three Na(+) ions and one proton, in parallel with the counter-transport of one K(+) ion. Mediates Cl(-) flux that is not coupled to amino acid transport; this avoids the accumulation of negative charges due to aspartate and Na(+) symport. Essential for the rapid removal of released glutamate from the synaptic cleft, and for terminating the postsynaptic action of glutamate. The polypeptide is Excitatory amino acid transporter 2 (Slc1a2) (Mus musculus (Mouse)).